A 758-amino-acid chain; its full sequence is 5-methyltetrahydropteroyltriglutamate--homocysteine methyltransferase (758 aa).

Residues 16 to 19 and K116 each bind 5-methyltetrahydropteroyltri-L-glutamate; that span reads RELK. L-homocysteine is bound by residues 436 to 438 and E489; that span reads IGS. L-methionine contacts are provided by residues 436–438 and E489; that span reads IGS. 5-methyltetrahydropteroyltri-L-glutamate-binding positions include 520 to 521 and W566; that span reads RC. D604 serves as a coordination point for L-homocysteine. An L-methionine-binding site is contributed by D604. A 5-methyltetrahydropteroyltri-L-glutamate-binding site is contributed by E610. Zn(2+)-binding residues include H646, C648, and E670. H699 serves as the catalytic Proton donor. C731 contributes to the Zn(2+) binding site.

Belongs to the vitamin-B12 independent methionine synthase family. It depends on Zn(2+) as a cofactor.

It carries out the reaction 5-methyltetrahydropteroyltri-L-glutamate + L-homocysteine = tetrahydropteroyltri-L-glutamate + L-methionine. Its pathway is amino-acid biosynthesis; L-methionine biosynthesis via de novo pathway; L-methionine from L-homocysteine (MetE route): step 1/1. Its function is as follows. Catalyzes the transfer of a methyl group from 5-methyltetrahydrofolate to homocysteine resulting in methionine formation. The sequence is that of 5-methyltetrahydropteroyltriglutamate--homocysteine methyltransferase from Xylella fastidiosa (strain M23).